Consider the following 541-residue polypeptide: Carboxypeptidase Y homolog A (541 aa).

The signal sequence occupies residues 1–17; it reads MKVATSALLIGAAAAQQ. The propeptide occupies 18–125; that stretch reads QQILKFPDSF…KLEQYSLRAK (108 aa). 5 disulfide bridges follow: C179/C418, C313/C327, C337/C360, C344/C353, and C382/C388. N210 carries an N-linked (GlcNAc...) asparagine glycan. S266 is a catalytic residue. Residue D457 is part of the active site. An N-linked (GlcNAc...) asparagine glycan is attached at N505. H516 is an active-site residue.

This sequence belongs to the peptidase S10 family.

The protein localises to the vacuole. It catalyses the reaction Release of a C-terminal amino acid with broad specificity.. Its function is as follows. Vacuolar carboxypeptidase involved in degradation of small peptides. Digests preferentially peptides containing an aliphatic or hydrophobic residue in P1' position, as well as methionine, leucine or phenylalanine in P1 position of ester substrate. The protein is Carboxypeptidase Y homolog A (cpyA) of Pyrenophora tritici-repentis (strain Pt-1C-BFP) (Wheat tan spot fungus).